The chain runs to 57 residues: uncharacterized protein (57 aa).

Residues Met-1–Ala-20 form the signal peptide.

This is an uncharacterized protein from Escherichia coli (strain K12).